A 115-amino-acid polypeptide reads, in one-letter code: MLSRKATAILLVVHAAAMLASQTEGFVPIFTYGEVQRMQEKERYKGQKKSLSVQQRSEEVGPVDPAEPREEKQEVIKLTAPVEIGMRMNSRQLEKYQATLEGLLRKALPSSRNAQ.

The signal sequence occupies residues methionine 1 to glycine 25. Positions arginine 43 to glutamine 73 are disordered.

The protein belongs to the motilin family.

The protein resides in the secreted. In terms of biological role, plays an important role in the regulation of interdigestive gastrointestinal motility and indirectly causes rhythmic contraction of duodenal and colonic smooth muscle. This Ovis aries (Sheep) protein is Promotilin (MLN).